We begin with the raw amino-acid sequence, 112 residues long: uncharacterized protein (112 aa).

To M.jannaschii MJ1244 and M.thermoautotrophicum MTH1110.

This is an uncharacterized protein from Methanocaldococcus jannaschii (strain ATCC 43067 / DSM 2661 / JAL-1 / JCM 10045 / NBRC 100440) (Methanococcus jannaschii).